We begin with the raw amino-acid sequence, 74 residues long: Small ribosomal subunit protein bS18 (74 aa).

It belongs to the bacterial ribosomal protein bS18 family. In terms of assembly, part of the 30S ribosomal subunit. Forms a tight heterodimer with protein bS6.

Its function is as follows. Binds as a heterodimer with protein bS6 to the central domain of the 16S rRNA, where it helps stabilize the platform of the 30S subunit. This Coprothermobacter proteolyticus (strain ATCC 35245 / DSM 5265 / OCM 4 / BT) protein is Small ribosomal subunit protein bS18.